A 370-amino-acid chain; its full sequence is GDSL esterase/lipase At1g33811 (370 aa).

The N-terminal stretch at 1 to 24 (MGILRFVLLISLNLVLFGFKTTVS) is a signal peptide. The active-site Nucleophile is Ser41. 3 N-linked (GlcNAc...) asparagine glycosylation sites follow: Asn203, Asn241, and Asn242. Active-site residues include Asp336 and His339.

Belongs to the 'GDSL' lipolytic enzyme family.

It is found in the secreted. This is GDSL esterase/lipase At1g33811 from Arabidopsis thaliana (Mouse-ear cress).